The sequence spans 330 residues: Ketol-acid reductoisomerase (NADP(+)) (330 aa).

The KARI N-terminal Rossmann domain maps to 1-181 (MNVYYEQDAD…GGAKAGVIET (181 aa)). NADP(+) contacts are provided by residues 24–27 (YGSQ), Arg-47, Ser-50, Ser-52, and 82–85 (DQYQ). The active site involves His-107. Gly-133 provides a ligand contact to NADP(+). The KARI C-terminal knotted domain maps to 182 to 327 (TIKDETETDL…AKLRNMMSWL (146 aa)). Mg(2+) is bound by residues Asp-190, Glu-194, Glu-226, and Glu-230. Ser-251 lines the substrate pocket.

It belongs to the ketol-acid reductoisomerase family. Requires Mg(2+) as cofactor.

The catalysed reaction is (2R)-2,3-dihydroxy-3-methylbutanoate + NADP(+) = (2S)-2-acetolactate + NADPH + H(+). The enzyme catalyses (2R,3R)-2,3-dihydroxy-3-methylpentanoate + NADP(+) = (S)-2-ethyl-2-hydroxy-3-oxobutanoate + NADPH + H(+). The protein operates within amino-acid biosynthesis; L-isoleucine biosynthesis; L-isoleucine from 2-oxobutanoate: step 2/4. It participates in amino-acid biosynthesis; L-valine biosynthesis; L-valine from pyruvate: step 2/4. Involved in the biosynthesis of branched-chain amino acids (BCAA). Catalyzes an alkyl-migration followed by a ketol-acid reduction of (S)-2-acetolactate (S2AL) to yield (R)-2,3-dihydroxy-isovalerate. In the isomerase reaction, S2AL is rearranged via a Mg-dependent methyl migration to produce 3-hydroxy-3-methyl-2-ketobutyrate (HMKB). In the reductase reaction, this 2-ketoacid undergoes a metal-dependent reduction by NADPH to yield (R)-2,3-dihydroxy-isovalerate. This Prosthecochloris aestuarii (strain DSM 271 / SK 413) protein is Ketol-acid reductoisomerase (NADP(+)).